The primary structure comprises 132 residues: Small ribosomal subunit protein uS8 (132 aa).

It belongs to the universal ribosomal protein uS8 family. As to quaternary structure, part of the 30S ribosomal subunit. Contacts proteins S5 and S12.

In terms of biological role, one of the primary rRNA binding proteins, it binds directly to 16S rRNA central domain where it helps coordinate assembly of the platform of the 30S subunit. The sequence is that of Small ribosomal subunit protein uS8 from Nitrobacter hamburgensis (strain DSM 10229 / NCIMB 13809 / X14).